A 485-amino-acid polypeptide reads, in one-letter code: Noelin (485 aa).

An N-terminal signal peptide occupies residues 1–24 (MSVPLLKIGVVLSTMAMITNWMSQ). N33, N103, N187, N288, N307, N394, N431, and N473 each carry an N-linked (GlcNAc...) asparagine glycan. Positions 87-225 (RDARTKQLRQ…ERLRACMQKL (139 aa)) form a coiled coil. Residues 226–478 (ACGKLTGISD…QTLYNVTLFH (253 aa)) form the Olfactomedin-like domain. C227 and C409 are oxidised to a cystine.

As to quaternary structure, homotetramer; disulfide-linked. Dimer of dimers, giving rise to a V-shaped homotretramer. Isoform 1 and isoform 3 interact with RTN4R. Identified in a complex with RTN4R and LINGO1. Peripherally associated with AMPAR complex. AMPAR complex consists of an inner core made of 4 pore-forming GluA/GRIA proteins (GRIA1, GRIA2, GRIA3 and GRIA4) and 4 major auxiliary subunits arranged in a twofold symmetry. One of the two pairs of distinct binding sites is occupied either by CNIH2, CNIH3 or CACNG2, CACNG3. The other harbors CACNG2, CACNG3, CACNG4, CACNG8 or GSG1L. This inner core of AMPAR complex is complemented by outer core constituents binding directly to the GluA/GRIA proteins at sites distinct from the interaction sites of the inner core constituents. Outer core constituents include at least PRRT1, PRRT2, CKAMP44/SHISA9, FRRS1L and NRN1. The proteins of the inner and outer core serve as a platform for other, more peripherally associated AMPAR constituents, including OLFM1. Alone or in combination, these auxiliary subunits control the gating and pharmacology of the AMPAR complex and profoundly impact their biogenesis and protein processing. Interacts with OLFM2. Post-translationally, in isoform 3 and isoform 4, the signal peptide is predicted to end in position 17. As to expression, expressed in the brain (at protein level). Expressed in the brain, predominantly in the cortex and hippocampus. In the pituitary only the two A-type and in the adrenal glands only the two B-type forms were detected.

The protein resides in the secreted. The protein localises to the synapse. It is found in the endoplasmic reticulum. Its subcellular location is the cell projection. It localises to the axon. The protein resides in the perikaryon. Its function is as follows. Contributes to the regulation of axonal growth in the embryonic and adult central nervous system by inhibiting interactions between RTN4R and LINGO1. Inhibits RTN4R-mediated axon growth cone collapse. May play an important role in regulating the production of neural crest cells by the neural tube. May be required for normal responses to olfactory stimuli. This Rattus norvegicus (Rat) protein is Noelin (Olfm1).